Consider the following 417-residue polypeptide: Actin-related protein 10 (417 aa).

The protein belongs to the actin family. Subunit of dynactin, a multiprotein complex part of a tripartite complex with dynein and a adapter, such as BICDL1, BICD2 or HOOK3. The dynactin complex is built around ACTR1A/ACTB filament and consists of an actin-related filament composed of a shoulder domain, a pointed end and a barbed end. Its length is defined by its flexible shoulder domain. The soulder is composed of 2 DCTN1 subunits, 4 DCTN2 and 2 DCTN3. The 4 DCNT2 (via N-terminus) bind the ACTR1A filament and act as molecular rulers to determine the length. The pointed end is important for binding dynein-dynactin cargo adapters. Consists of 4 subunits: ACTR10, DCNT4, DCTN5 and DCTN6. The barbed end is composed of a CAPZA1:CAPZB heterodimers, which binds ACTR1A/ACTB filament and dynactin and stabilizes dynactin.

It is found in the cytoplasm. The protein localises to the cytoskeleton. Functionally, part of the dynactin complex that activates the molecular motor dynein for ultra-processive transport along microtubules. This Mus musculus (Mouse) protein is Actin-related protein 10 (Actr10).